Reading from the N-terminus, the 246-residue chain is Alpha-tubulin N-acetyltransferase (246 aa).

In terms of domain architecture, N-acetyltransferase spans Leu-21–Phe-202. Residues Phe-135–Lys-148 and Ser-172–Lys-181 contribute to the acetyl-CoA site.

Belongs to the acetyltransferase ATAT1 family.

The catalysed reaction is L-lysyl-[alpha-tubulin] + acetyl-CoA = N(6)-acetyl-L-lysyl-[alpha-tubulin] + CoA + H(+). Specifically acetylates 'Lys-40' in alpha-tubulin on the lumenal side of microtubules. Promotes microtubule destabilization and accelerates microtubule dynamics; this activity may be independent of acetylation activity. Acetylates alpha-tubulin with a slow enzymatic rate, due to a catalytic site that is not optimized for acetyl transfer. Enters the microtubule through each end and diffuses quickly throughout the lumen of microtubules. Acetylates only long/old microtubules because of its slow acetylation rate since it does not have time to act on dynamically unstable microtubules before the enzyme is released. This chain is Alpha-tubulin N-acetyltransferase, found in Leishmania major.